Consider the following 290-residue polypeptide: Virginiamycin B lyase (290 aa).

His-226 serves as a coordination point for substrate. Glu-265 provides a ligand contact to Mg(2+). His-267 serves as the catalytic Proton acceptor. Glu-282 contributes to the Mg(2+) binding site.

The protein belongs to the Vgb family. As to quaternary structure, monomer. Mg(2+) is required as a cofactor.

Functionally, inactivates the type B streptogramin antibiotics by linearizing the lactone ring at the ester linkage, generating a free phenylglycine carboxylate and converting the threonyl moiety into 2-amino-butenoic acid. The sequence is that of Virginiamycin B lyase from Mycolicibacterium vanbaalenii (strain DSM 7251 / JCM 13017 / BCRC 16820 / KCTC 9966 / NRRL B-24157 / PYR-1) (Mycobacterium vanbaalenii).